A 160-amino-acid polypeptide reads, in one-letter code: Calsequestrin-2 (160 aa).

The protein belongs to the calsequestrin family. Monomer, homodimer and homooligomer. Mostly monomeric in the absence of calcium. Forms higher oligomers in a calcium-dependent manner. Dimers associate to form tetramers, that then form linear homomer chains. Interacts with ASPH and TRDN. Phosphorylation in the C-terminus, probably by CK2, moderately increases calcium buffering capacity. Post-translationally, N-glycosylated.

Its subcellular location is the sarcoplasmic reticulum lumen. Calsequestrin is a high-capacity, moderate affinity, calcium-binding protein and thus acts as an internal calcium store in muscle. Calcium ions are bound by clusters of acidic residues at the protein surface, especially at the interface between subunits. Can bind around 60 Ca(2+) ions. Regulates the release of lumenal Ca(2+) via the calcium release channel RYR2; this plays an important role in triggering muscle contraction. Plays a role in excitation-contraction coupling in the heart and in regulating the rate of heart beats. The sequence is that of Calsequestrin-2 (CASQ2) from Sus scrofa (Pig).